We begin with the raw amino-acid sequence, 760 residues long: Metal transporter cnnm-2 (760 aa).

Positions 1–21 (MIIKVFLRLLLLCAHIVCIDG) are cleaved as a signal peptide. The Extracellular portion of the chain corresponds to 22–153 (KLEIRPVVSG…ETFMPVWAQC (132 aa)). An N-linked (GlcNAc...) asparagine glycan is attached at Asn88. Residues 145–323 (TFMPVWAQCA…MENDACDIDL (179 aa)) form the CNNM transmembrane domain. Residues 154-174 (AILCLLFSISALCSGLTLGLM) traverse the membrane as a helical segment. Residues 175-208 (ALTPQELSILMKSGSQREKKHAAAIYPIRCHGNR) are Cytoplasmic-facing. Residues 209–229 (LLCTVIIMNVIVNTGITLLFD) traverse the membrane as a helical segment. A topological domain (extracellular) is located at residue Asp230. The chain crosses the membrane as a helical span at residues 231 to 251 (LAEGLIAFVASTVGIVVFGEI). At 252 to 261 (LPQSICVKYG) the chain is on the cytoplasmic side. Residues 262 to 282 (LAVGANTIFITKFFMFLLFPI) traverse the membrane as a helical segment. Residues 283–760 (TWPLGKILDK…SVEELKPLME (478 aa)) lie on the Extracellular side of the membrane. Residues Asn302 and Asn403 are each glycosylated (N-linked (GlcNAc...) asparagine). 2 CBS domains span residues 344–406 (MTDI…NITV) and 442–512 (MVAK…ITDE). N-linked (GlcNAc...) asparagine glycans are attached at residues Asn528, Asn592, and Asn667. Residues 708–734 (DDFGSPTRKASILDSSPNSRKRSSTSV) form a disordered region.

It belongs to the ACDP family.

It is found in the cell membrane. Its function is as follows. Probable metal transporter. Probably acts redundantly with the other metal transport proteins cnnm-1, cnnm-3, cnnm-4 and cnnm-5 to regulate Mg(2+) homeostasis. The protein is Metal transporter cnnm-2 of Caenorhabditis elegans.